Consider the following 131-residue polypeptide: MASPSKKVVRKKKEKKNIPNGVAHIQATFNNTIITITDPVGNVVAWSSAGSKGFKGSRKSTPFAAQIAAEECARKAQEHGMRSVEVFVKGPGSGRESALRALQAAGFHVNFIRDVTPIPHNGCRPPKRRRV.

The protein belongs to the universal ribosomal protein uS11 family. Part of the 30S ribosomal subunit. Interacts with proteins S7 and S18. Binds to IF-3.

Functionally, located on the platform of the 30S subunit, it bridges several disparate RNA helices of the 16S rRNA. Forms part of the Shine-Dalgarno cleft in the 70S ribosome. The sequence is that of Small ribosomal subunit protein uS11 from Geobacter sulfurreducens (strain ATCC 51573 / DSM 12127 / PCA).